A 1204-amino-acid chain; its full sequence is MPQFTKEQEKAINDRGHDILVSASAGSGKTTVLVERVLKEILAGTQVDELLVVTFTKAAAEEMKTRIKAALTKEMAKPGVDYRYLREQLNQIDTANISTIDAFCLDVIHRFYYSIELDPSFTILTDDTQATLLKERALREIEGEMLTSKDKAFRHFYDNFAGDRDADSPRDLLLDLYNFAMAKPEYKKWLAQLPQIYEIEDSVIGSKIWQKQIKPYIATKFSKLQEKIASYLTQAIMETKELAKVKESFTLFAQNLNNFVQAVKEDDDYDKQRELLRSCVFTINFRKSKKWDEDLLEFYNEIQSLKDEAKSQVFDTFTSFYAVTEKEQIKIMQESQKIVTAISTAEIKLIERFNQLKRNENLLDYSDMEQLAYQILSQDTSSSQMARDFYQNKFKEILIDEYQDINALQERIIQQIKSEKKNTLFMVGDVKQSIYGFRQAEPSLFLQKYHQFAEDENEHEERILLSDNFRSTEPVTQTVNAVFKSILSTDFGGIDYQKEGQLIFGAKYYPKSLPQASEVIVHEKKNNNEKSENEIDFSEIQMVLARIKQLEDEHVQIFDSNTGKMRDMEYSDIAILTRSRSDNLEIMQEFAKQDIPLFVTDAENYFQTFELTVMMNYLKIIDNPDQDIPLVTVLRSPLFNFDEKELAKIRIKSKNSNFYSALTSYVGTNDVLSKKCKNFLNQLAELRSFATTHRISELIWSIYERTNLLEIMTALPNGEQRRVNLEALYERATSYESAGFKGLYQFINFIDRMRRSQKDLAQPLLTKEAGNAVRLMTIHGSKGLEFPIVFYVGMQHHYQMRDLNGNYIINSDSMGITLREQNYRVDSLVKAMGNITKKQQLLEEEARILYVALTRAKQKLILVGDVPSFNKKVKEWSTELNHAGQLPLINKLSATSPLSFIGPSLRFDRHVAIKLNDITKSIDQSQKILFIDYQDEDTKFIKKDEDTDNQNENTRKSALLTQTVNKLYQFNYPFRDASETTAYQAVSEIKKAFNDPIDAELENSHLLTSTNRYLQPIDTKPNFLYQTKFTGAEIGTATHLILQYYDYTNDSADNLDQEIATLIEQKKLNPDIVSSLNKDQIDWFVHGDFAKDFWKEPTNLKREVDFSSLLSARTLFKDFSDPDAKILVHGTIDGYFVAKNGIILFDYKTDHVNKTNIDKSIELIKEKYTGQLRLYEQALNEFSEKKVIGKYLILLDAKQVVEVK.

The region spanning 2-472 is the UvrD-like helicase ATP-binding domain; that stretch reads PQFTKEQEKA…ILLSDNFRST (471 aa). 23 to 30 is an ATP binding site; sequence ASAGSGKT. The UvrD-like helicase C-terminal domain occupies 500–783; that stretch reads GQLIFGAKYY…RLMTIHGSKG (284 aa).

It belongs to the helicase family. AddA subfamily. Heterodimer of AddA and AddB/RexB. Mg(2+) is required as a cofactor.

The catalysed reaction is Couples ATP hydrolysis with the unwinding of duplex DNA by translocating in the 3'-5' direction.. The enzyme catalyses ATP + H2O = ADP + phosphate + H(+). Functionally, the heterodimer acts as both an ATP-dependent DNA helicase and an ATP-dependent, dual-direction single-stranded exonuclease. Recognizes the chi site generating a DNA molecule suitable for the initiation of homologous recombination. The AddA nuclease domain is required for chi fragment generation; this subunit has the helicase and 3' -&gt; 5' nuclease activities. The protein is ATP-dependent helicase/nuclease subunit A of Lactobacillus helveticus (strain DPC 4571).